A 177-amino-acid chain; its full sequence is MTDSTHPTPSARPPRQPRTGTTGTGARKAGSKSGRSRAREFALQALYQHLVGGNDATAIDVFTRDLSGFHKADAAHYDALLHGCITTAQYMDELIAPQLDRKMSEISPIEHAVMWIGVYEFQHCQDVPWRVVINECIELAKEFGGTDGHKYVNGVLNGLAPQLRATEVAADKAAARG.

Residues 1–35 are disordered; it reads MTDSTHPTPSARPPRQPRTGTTGTGARKAGSKSGR. Low complexity predominate over residues 17–28; that stretch reads PRTGTTGTGARK.

Belongs to the NusB family.

In terms of biological role, involved in transcription antitermination. Required for transcription of ribosomal RNA (rRNA) genes. Binds specifically to the boxA antiterminator sequence of the ribosomal RNA (rrn) operons. The sequence is that of Transcription antitermination protein NusB from Acidovorax sp. (strain JS42).